Here is a 60-residue protein sequence, read N- to C-terminus: Sec-independent protein translocase protein TatA (60 aa).

A helical transmembrane segment spans residues 1–21 (MAGLGVTELLIILAIVIVLFG).

The protein belongs to the TatA/E family. In terms of assembly, forms a complex with TatC.

The protein resides in the cell membrane. Part of the twin-arginine translocation (Tat) system that transports large folded proteins containing a characteristic twin-arginine motif in their signal peptide across membranes. TatA could form the protein-conducting channel of the Tat system. This is Sec-independent protein translocase protein TatA from Herpetosiphon aurantiacus (strain ATCC 23779 / DSM 785 / 114-95).